Reading from the N-terminus, the 365-residue chain is tRNA/tmRNA (uracil-C(5))-methyltransferase (365 aa).

5 residues coordinate S-adenosyl-L-methionine: glutamine 189, tyrosine 217, asparagine 222, glutamate 238, and aspartate 298. Cysteine 323 functions as the Nucleophile in the catalytic mechanism. Glutamate 357 acts as the Proton acceptor in catalysis.

This sequence belongs to the class I-like SAM-binding methyltransferase superfamily. RNA M5U methyltransferase family. TrmA subfamily.

The enzyme catalyses uridine(54) in tRNA + S-adenosyl-L-methionine = 5-methyluridine(54) in tRNA + S-adenosyl-L-homocysteine + H(+). The catalysed reaction is uridine(341) in tmRNA + S-adenosyl-L-methionine = 5-methyluridine(341) in tmRNA + S-adenosyl-L-homocysteine + H(+). Its function is as follows. Dual-specificity methyltransferase that catalyzes the formation of 5-methyluridine at position 54 (m5U54) in all tRNAs, and that of position 341 (m5U341) in tmRNA (transfer-mRNA). This chain is tRNA/tmRNA (uracil-C(5))-methyltransferase, found in Shewanella pealeana (strain ATCC 700345 / ANG-SQ1).